The following is a 128-amino-acid chain: Large ribosomal subunit protein bL17 (128 aa).

It belongs to the bacterial ribosomal protein bL17 family. Part of the 50S ribosomal subunit. Contacts protein L32.

This chain is Large ribosomal subunit protein bL17, found in Proteus mirabilis (strain HI4320).